Reading from the N-terminus, the 1006-residue chain is 5'-3' exoribonuclease 2 (1006 aa).

Coiled-coil stretches lie at residues phenylalanine 256 to glutamine 287 and arginine 453 to glutamate 544. Residues aspartate 492–isoleucine 529 form a required for retention in the nucleus region. Residues aspartate 561–proline 575 show a composition bias toward basic and acidic residues. 2 disordered regions span residues aspartate 561–glutamate 584 and histidine 939–arginine 1006. Phosphoserine is present on serine 574. The segment covering histidine 939–arginine 956 has biased composition (polar residues). 6 consecutive repeat copies span residues serine 955 to aspartate 958, asparagine 961 to tyrosine 964, asparagine 972 to asparagine 974, tyrosine 975 to asparagine 978, tyrosine 984 to glycine 986, and serine 996 to aspartate 999. Positions serine 955 to aspartate 999 are 2 X 4 AA repeats of S-R-Y-D, N-N-N-Y, Y-S-G-N. A compositionally biased stretch (low complexity) spans glycine 959–asparagine 993. Positions serine 996–arginine 1006 are enriched in basic and acidic residues.

It belongs to the 5'-3' exonuclease family. XRN2/RAT1 subfamily. As to quaternary structure, interacts with RAI1 and RTT103. The cofactor is Mg(2+). Mn(2+) is required as a cofactor.

It is found in the nucleus. Its activity is regulated as follows. Inhibited by nucleoside 3', 5'-bisphosphates. Its function is as follows. Possesses 5'-&gt;3' exoribonuclease activity. Required for the processing of nuclear mRNA, rRNA and small nucleolar RNA (snoRNA) precursors. May promote termination of transcription by RNA polymerase II via the recruitment of 3'-end processing factors to the poly(A) site and by the degradation of nascent RNA downstream of the poly(A) site. The chain is 5'-3' exoribonuclease 2 (RAT1) from Saccharomyces cerevisiae (strain ATCC 204508 / S288c) (Baker's yeast).